The chain runs to 139 residues: MRSFEFFEHTADVGIRAYGKSLEEAFSNAALGVFEIITDTSKVKPIEYREIYLNGYDLENLLYKWIEELLYYYDSELMVFSKFDLMIDQDSMTLEGKAWGEKFNGKIHERRTVVKAMTYHQLSIEKTENCYVITFVVDI.

Ca(2+)-binding residues include Asp-12, Asp-138, and Ile-139.

It belongs to the archease family.

Activates the tRNA-splicing ligase complex by facilitating the enzymatic turnover of catalytic subunit RtcB. Acts by promoting the guanylylation of RtcB, a key intermediate step in tRNA ligation. Can also alter the NTP specificity of RtcB such that ATP, dGTP or ITP is used efficiently. The polypeptide is Protein archease (Saccharolobus islandicus (strain Y.N.15.51 / Yellowstone #2) (Sulfolobus islandicus)).